Here is a 443-residue protein sequence, read N- to C-terminus: Carboxypeptidase M (443 aa).

The signal sequence occupies residues 1-17 (MDFPCLWLGLLLPLVAA). Positions 21–311 (NYHRQEGMEA…ASLIEYIKQV (291 aa)) constitute a Peptidase M14 domain. Asn-38 carries an N-linked (GlcNAc...) asparagine glycan. Zn(2+) contacts are provided by His-83 and Glu-86. 2 N-linked (GlcNAc...) asparagine glycosylation sites follow: Asn-115 and Asn-164. Intrachain disulfides connect Cys-138/Cys-285, Cys-242/Cys-284, and Cys-341/Cys-410. His-190 serves as a coordination point for Zn(2+). Residue Glu-281 is the Proton donor/acceptor of the active site. N-linked (GlcNAc...) asparagine glycosylation is found at Asn-363 and Asn-384. A lipid anchor (GPI-anchor amidated serine) is attached at Ser-423. Residues 424–443 (AATKPSLFLFLVSLLHIFFK) constitute a propeptide, removed in mature form.

Belongs to the peptidase M14 family. It depends on Zn(2+) as a cofactor.

It localises to the cell membrane. The enzyme catalyses Cleavage of C-terminal arginine or lysine residues from polypeptides.. With respect to regulation, inhibited by O-phenanthroline and MGTA and activated by cobalt. Specifically removes C-terminal basic residues (Arg or Lys) from peptides and proteins. It is believed to play important roles in the control of peptide hormone and growth factor activity at the cell surface, and in the membrane-localized degradation of extracellular proteins. This Homo sapiens (Human) protein is Carboxypeptidase M (CPM).